We begin with the raw amino-acid sequence, 701 residues long: Elongation factor G (701 aa).

The region spanning 8–290 is the tr-type G domain; it reads SLYRNIGISA…AVIDYLPAPT (283 aa). Residues 17-24, 88-92, and 142-145 contribute to the GTP site; these read AHIDAGKT, DTPGH, and NKMD.

Belongs to the TRAFAC class translation factor GTPase superfamily. Classic translation factor GTPase family. EF-G/EF-2 subfamily.

It is found in the cytoplasm. Catalyzes the GTP-dependent ribosomal translocation step during translation elongation. During this step, the ribosome changes from the pre-translocational (PRE) to the post-translocational (POST) state as the newly formed A-site-bound peptidyl-tRNA and P-site-bound deacylated tRNA move to the P and E sites, respectively. Catalyzes the coordinated movement of the two tRNA molecules, the mRNA and conformational changes in the ribosome. This Haemophilus ducreyi (strain 35000HP / ATCC 700724) protein is Elongation factor G.